The chain runs to 611 residues: Leukotriene A-4 hydrolase (611 aa).

At K73 the chain carries N6-acetyllysine. A peptide-binding positions include 135 to 137 (QCQ) and 267 to 272 (PYGGME). Residue H296 coordinates Zn(2+). The active-site Proton acceptor is E297. H300 and E319 together coordinate Zn(2+). K337 bears the N6-acetyllysine mark. Y384 (proton donor) is an active-site residue. N6-acetyllysine is present on K414. S416 is modified (phosphoserine). 564 to 566 (RMK) is a binding site for a peptide. K573 carries the N6-acetyllysine modification.

This sequence belongs to the peptidase M1 family. Monomer. Requires Zn(2+) as cofactor. In terms of processing, phosphorylation at Ser-416 inhibits leukotriene-A4 hydrolase activity. activity.

Its subcellular location is the cytoplasm. The catalysed reaction is leukotriene A4 + H2O = leukotriene B4. It catalyses the reaction (5S,6S)-epoxy-(18R)-hydroxy-(7E,9E,11Z,14Z,16E)-eicosapentaenoate + H2O = resolvin E1. The enzyme catalyses (5S,6S)-epoxy-(18S)-hydroxy-(7E,9E,11Z,14Z,16E)-eicosapentaenoate + H2O = 18S-resolvin E1. It carries out the reaction Release of the N-terminal residue from a tripeptide.. The protein operates within lipid metabolism; leukotriene B4 biosynthesis. Its activity is regulated as follows. Inhibited by bestatin. The epoxide hydrolase activity is restrained by suicide inactivation that involves binding of LTA4 to Tyr-379. 4-(4-benzylphenyl)thiazol-2-amine (ARM1) selectively inhibits the epoxide hydrolase activity. Its function is as follows. Bifunctional zinc metalloenzyme that comprises both epoxide hydrolase (EH) and aminopeptidase activities. Acts as an epoxide hydrolase to catalyze the conversion of LTA4 to the pro-inflammatory mediator leukotriene B4 (LTB4). Also has aminopeptidase activity, with high affinity for N-terminal arginines of various synthetic tripeptides. In addition to its pro-inflammatory EH activity, may also counteract inflammation by its aminopeptidase activity, which inactivates by cleavage another neutrophil attractant, the tripeptide Pro-Gly-Pro (PGP), a bioactive fragment of collagen generated by the action of matrix metalloproteinase-9 (MMP9) and prolylendopeptidase (PREPL). Involved also in the biosynthesis of resolvin E1 and 18S-resolvin E1 from eicosapentaenoic acid, two lipid mediators that show potent anti-inflammatory and pro-resolving actions. In Bos taurus (Bovine), this protein is Leukotriene A-4 hydrolase (LTA4H).